The chain runs to 182 residues: D-lyxose ketol-isomerase (182 aa).

The Mn(2+) site is built by histidine 74, histidine 76, glutamate 87, and histidine 142.

Belongs to the D-lyxose ketol-isomerase family. In terms of assembly, homodimer. Mn(2+) serves as cofactor.

The enzyme catalyses D-lyxose = D-xylulose. Its function is as follows. Sugar isomerase that catalyzes the reversible isomerization of D-lyxose to D-xylulose. Shows weak activity with D-mannose and L-ribose. This chain is D-lyxose ketol-isomerase, found in Cohnella laeviribosi.